The primary structure comprises 497 residues: Probable cytosol aminopeptidase (497 aa).

K267 and D272 together coordinate Mn(2+). K279 is an active-site residue. Residues D290, D349, and E351 each contribute to the Mn(2+) site. Residue R353 is part of the active site.

This sequence belongs to the peptidase M17 family. Mn(2+) serves as cofactor.

The protein localises to the cytoplasm. It carries out the reaction Release of an N-terminal amino acid, Xaa-|-Yaa-, in which Xaa is preferably Leu, but may be other amino acids including Pro although not Arg or Lys, and Yaa may be Pro. Amino acid amides and methyl esters are also readily hydrolyzed, but rates on arylamides are exceedingly low.. It catalyses the reaction Release of an N-terminal amino acid, preferentially leucine, but not glutamic or aspartic acids.. Its function is as follows. Presumably involved in the processing and regular turnover of intracellular proteins. Catalyzes the removal of unsubstituted N-terminal amino acids from various peptides. In Syntrophotalea carbinolica (strain DSM 2380 / NBRC 103641 / GraBd1) (Pelobacter carbinolicus), this protein is Probable cytosol aminopeptidase.